Reading from the N-terminus, the 529-residue chain is Nuclear distribution protein PAC1 (529 aa).

A coiled-coil region spans residues Arg68–Ser89. WD repeat units lie at residues Gln120 to Pro159, Ala165 to Thr218, Gly221 to Thr261, Gly264 to Leu318, Gly321 to His395, Gly416 to Arg455, and Thr496 to Ser529.

It belongs to the WD repeat LIS1/nudF family. Self-associates. Interacts with NDL1 and dynein.

It localises to the cytoplasm. The protein resides in the cytoskeleton. It is found in the spindle pole. Positively regulates the activity of the minus-end directed microtubule motor protein dynein. Plays a central role in positioning the mitotic spindle at the bud neck during cell division. Targets cytoplasmic dynein to microtubule plus ends, thereby promoting dynein-mediated microtubule sliding along the bud cortex and consequently the movement of the mitotic spindle to the bud neck. This Debaryomyces hansenii (strain ATCC 36239 / CBS 767 / BCRC 21394 / JCM 1990 / NBRC 0083 / IGC 2968) (Yeast) protein is Nuclear distribution protein PAC1.